A 728-amino-acid polypeptide reads, in one-letter code: Catalase-peroxidase (728 aa).

A cross-link (tryptophyl-tyrosyl-methioninium (Trp-Tyr) (with M-251)) is located at residues 97-225; it reads WHSAGTYRIA…LAAVMMGLIY (129 aa). The active-site Proton acceptor is His98. A cross-link (tryptophyl-tyrosyl-methioninium (Tyr-Met) (with W-97)) is located at residues 225–251; the sequence is YVNPEGVDGNPDPLRTAQDIRITFARM. His266 is a binding site for heme b.

This sequence belongs to the peroxidase family. Peroxidase/catalase subfamily. As to quaternary structure, homodimer or homotetramer. Requires heme b as cofactor. In terms of processing, formation of the three residue Trp-Tyr-Met cross-link is important for the catalase, but not the peroxidase activity of the enzyme.

The catalysed reaction is H2O2 + AH2 = A + 2 H2O. It carries out the reaction 2 H2O2 = O2 + 2 H2O. In terms of biological role, bifunctional enzyme with both catalase and broad-spectrum peroxidase activity. This Shewanella putrefaciens (strain CN-32 / ATCC BAA-453) protein is Catalase-peroxidase.